The primary structure comprises 398 residues: Streptopain (398 aa).

An N-terminal signal peptide occupies residues 1–27; it reads MNKKKLGIRLLSLLALGGFVLANPVFA. A propeptide spanning residues 28–145 is cleaved from the precursor; that stretch reads DQNFARNEKE…TTYAGTAEIK (118 aa). C192 acts as the Nucleophile in catalysis. A Cysteine methyl disulfide; in zymogen form modification is found at C192. S282 and G339 together coordinate a protein. The active-site Proton acceptor is the H340. Residues 368 to 390 form a C-terminal active site loop region; the sequence is RLDALNPSALGTGGGAGGFNGYQ.

It belongs to the peptidase C10 family. In terms of assembly, monomer. In terms of processing, the mature protease is derived from the precursor sequence by cleavage, either in cis via an autocatalytic mechanism, or in trans by mature SpeB or host proteases (trypsin, plasmin or subtilisin). Maturation can involve a number of protein cleavage intermediates. Mature SpeB probably plays the most important role in protein maturation in physiological conditions. Post-translationally, methylthiolation at Cys-192 of the inactive zymogen form is probably involved in the mechanism of secretion of the proteinase into the culture fluid.

It is found in the secreted. Its subcellular location is the host extracellular space. The protein resides in the host cytoplasm. It catalyses the reaction Preferential cleavage with hydrophobic residues at P2, P1 and P1'.. Its activity is regulated as follows. Synthesized as an inactive zymogen to protect the intracellular components of the bacteria from proteolytic activity during protein production. Once secreted into the extracellular milieu, cleaved into the active protease: maturation can be mediated in cis by autocatalytic cleavage, or in trans by mature SpeB or host proteases. Protease activity is strongly inhibited by zinc and copper, which prevent its maturation into an active protease: inhibition by metal ions may be required to prevent proteolysis of streptococcal proteins. In terms of biological role, cysteine protease that acts as a key streptococcal virulence factor by cleaving host proteins involved in immune response. Triggers inflammation by mediating cleavage of host proteins, which can both promote host pathogenesis by triggering sterile inflammation and/or restrict streptococcal infection, depending on host immune statue and infection site. Cleaves host gasdermin-A (GSDMA) in epithelial cells, promoting GSDMA activation and formation of gasdermin pores, triggering pyroptosis. Pyroptosis triggers the elimination of the infected skin cell, depriving the pathogen of its protective niche, while inducing an inflammatory response. This ultimately prevents bacterial penetration of the epithelial barrier and a subsequent systemic dissemination of the pathogen. Also mediates cleavage of the cytokine precursor interleukin-1 beta (IL1B) to its mature form, resulting in inflammation and septic shock. SpeB-mediated maturation of IL1B plays a dual role depending on infection site: while IL1B inflammatory response prevents bacterial growth during invasive skin infections, it promotes streptococcal infection of the nasopharynx by disrupting colonization resistance mediated by the microbiota. Inhibits host autophagy be catalyzing cleavage and inactivation of key autophagy factors, such as CALCOCO2, NBR1 and SQSTM1. Cleaves and inhibits a number of complement factors, such as C2, C3-beta chain of C3, C4, C5 or SERPING1, thereby promoting evasion of host immunity. May also impair adaptive immunity by catalyzing cleavage and degradation of host immunoglobulins to promote immune system evasion; the relevance of this activity is however unsure in vivo. Catalyzes maturation and release of the peptide hormone bradykinin from the precursor Kininogen-1 (KNG1) to produce hypotension during septic shock. Also involved in bacterial translocation across the host epithelial barrier by mediating cleavage and degradation of host epithelial junction proteins, such as CDH1 and OCLN. Additionally, has been involved in degradation of fibronectin and vitronectin, two host extracellular matrix proteins involved in tissue integrity. Also able to catalyze cleavage and degradation of streptococcal proteins, such as C5a peptidase, EndoS or SmeZ. Degradation of streptococcal proteins is however strictly regulated to preserve integrity of other virulence factors. This Streptococcus pyogenes serotype M28 (strain MGAS6180) protein is Streptopain (speB).